A 297-amino-acid polypeptide reads, in one-letter code: 4-diphosphocytidyl-2-C-methyl-D-erythritol kinase (297 aa).

K19 is a catalytic residue. ATP is bound at residue 105–115 (PIASGIGGGSA). Residue D147 is part of the active site.

The protein belongs to the GHMP kinase family. IspE subfamily.

The catalysed reaction is 4-CDP-2-C-methyl-D-erythritol + ATP = 4-CDP-2-C-methyl-D-erythritol 2-phosphate + ADP + H(+). It participates in isoprenoid biosynthesis; isopentenyl diphosphate biosynthesis via DXP pathway; isopentenyl diphosphate from 1-deoxy-D-xylulose 5-phosphate: step 3/6. Functionally, catalyzes the phosphorylation of the position 2 hydroxy group of 4-diphosphocytidyl-2C-methyl-D-erythritol. This chain is 4-diphosphocytidyl-2-C-methyl-D-erythritol kinase, found in Rhizobium etli (strain CIAT 652).